Consider the following 181-residue polypeptide: Trafficking protein particle complex subunit 3 homolog (181 aa).

C70 is lipidated: S-palmitoyl cysteine.

This sequence belongs to the TRAPP small subunits family. BET3 subfamily. In terms of assembly, homodimer. Part of the multisubunit TRAPP (transport protein particle) complex.

The protein resides in the golgi apparatus. It localises to the cis-Golgi network. Its subcellular location is the endoplasmic reticulum. May play a role in vesicular transport from endoplasmic reticulum to Golgi. Required for the systemic spread of the RNAi response. This Caenorhabditis briggsae protein is Trafficking protein particle complex subunit 3 homolog.